We begin with the raw amino-acid sequence, 266 residues long: uncharacterized protein (266 aa).

The region spanning 35–131 (VLVGEGVLVK…WMLHIERCVT (97 aa)) is the PH domain. The segment at 152-212 (DGEAVKCMVC…VCDHCFDSLS (61 aa)) adopts an FYVE-type zinc-finger fold. Positions 158, 161, 175, 178, 183, 186, 204, and 207 each coordinate Zn(2+). Residues 213–266 (SATPGQEESEPKTGNRLHHEDSSSDSEDEVNGSGRSSNESRPTFYREDVQQPAT) form a disordered region. Composition is skewed to basic and acidic residues over residues 221–234 (SEPK…HEDS) and 256–266 (FYREDVQQPAT).

This is an uncharacterized protein from Caenorhabditis elegans.